The sequence spans 121 residues: Neuromedin-B (121 aa).

A signal peptide spans 1 to 24 (MARRAGGARMFGSLLLFALLAAGV). The residue at position 56 (M56) is a Methionine amide. Residues 60-121 (SLEPSSPSPL…RRLLVQILQK (62 aa)) constitute a propeptide that is removed on maturation.

It belongs to the bombesin/neuromedin-B/ranatensin family.

It is found in the secreted. The protein resides in the cell projection. Its subcellular location is the neuron projection. In terms of biological role, stimulates smooth muscle contraction. Induces sighing by acting directly on the pre-Botzinger complex, a cluster of several thousand neurons in the ventrolateral medulla responsible for inspiration during respiratory activity. Contributes to the induction of sneezing following exposure to chemical irritants or allergens which causes release of NMB by nasal sensory neurons and activation of NMBR-expressing neurons in the sneeze-evoking region of the brainstem. These in turn activate neurons of the caudal ventral respiratory group, giving rise to the sneezing response. Contributes to induction of acute itch, possibly through activation of the NMBR receptor on dorsal root ganglion neurons. Increases expression of NMBR and steroidogenic mediators STAR, CYP11A1 and HSD3B1 in Leydig cells, induces secretion of testosterone by Leydig cells and also promotes Leydig cell proliferation. Plays a role in the innate immune response to influenza A virus infection by enhancing interferon alpha expression and reducing expression of IL6. Plays a role in CSF1-induced proliferation of osteoclast precursors by contributing to the positive regulation of the expression of the CSF1 receptor CSF1R. In Homo sapiens (Human), this protein is Neuromedin-B (NMB).